The sequence spans 119 residues: Large ribosomal subunit protein bL20 (119 aa).

Belongs to the bacterial ribosomal protein bL20 family.

In terms of biological role, binds directly to 23S ribosomal RNA and is necessary for the in vitro assembly process of the 50S ribosomal subunit. It is not involved in the protein synthesizing functions of that subunit. This Enterococcus faecalis (strain ATCC 700802 / V583) protein is Large ribosomal subunit protein bL20.